We begin with the raw amino-acid sequence, 178 residues long: Large ribosomal subunit protein uL6 (178 aa).

It belongs to the universal ribosomal protein uL6 family. Part of the 50S ribosomal subunit.

Functionally, this protein binds to the 23S rRNA, and is important in its secondary structure. It is located near the subunit interface in the base of the L7/L12 stalk, and near the tRNA binding site of the peptidyltransferase center. The chain is Large ribosomal subunit protein uL6 from Listeria innocua serovar 6a (strain ATCC BAA-680 / CLIP 11262).